Here is a 503-residue protein sequence, read N- to C-terminus: Maturase K (503 aa).

It belongs to the intron maturase 2 family. MatK subfamily.

It is found in the plastid. The protein resides in the chloroplast. Functionally, usually encoded in the trnK tRNA gene intron. Probably assists in splicing its own and other chloroplast group II introns. The protein is Maturase K of Diospyros kaki (Kaki persimmon).